Reading from the N-terminus, the 76-residue chain is UPF0154 protein Sca_0984 (76 aa).

Residues 4 to 24 form a helical membrane-spanning segment; the sequence is WLAILLIVAALIIGLVGGFFL.

The protein belongs to the UPF0154 family.

The protein localises to the cell membrane. The sequence is that of UPF0154 protein Sca_0984 from Staphylococcus carnosus (strain TM300).